A 249-amino-acid polypeptide reads, in one-letter code: Type III pantothenate kinase (249 aa).

Residue 6 to 13 (DCGNSLIK) coordinates ATP. Residues Tyr-93 and 100–103 (GLDR) each bind substrate. Asp-102 functions as the Proton acceptor in the catalytic mechanism. Asp-122 serves as a coordination point for K(+). Thr-125 contacts ATP. Thr-181 is a substrate binding site.

Belongs to the type III pantothenate kinase family. As to quaternary structure, homodimer. Requires NH4(+) as cofactor. The cofactor is K(+).

It localises to the cytoplasm. The catalysed reaction is (R)-pantothenate + ATP = (R)-4'-phosphopantothenate + ADP + H(+). It participates in cofactor biosynthesis; coenzyme A biosynthesis; CoA from (R)-pantothenate: step 1/5. In terms of biological role, catalyzes the phosphorylation of pantothenate (Pan), the first step in CoA biosynthesis. The protein is Type III pantothenate kinase of Pseudomonas paraeruginosa (strain DSM 24068 / PA7) (Pseudomonas aeruginosa (strain PA7)).